A 93-amino-acid polypeptide reads, in one-letter code: Class II hydrophobin 1 (93 aa).

An N-terminal signal peptide occupies residues 1–16 (MKFFAVAALFVASAMA). 4 disulfide bridges follow: cysteine 24–cysteine 74, cysteine 35–cysteine 65, cysteine 36–cysteine 48, and cysteine 75–cysteine 86.

This sequence belongs to the cerato-ulmin hydrophobin family. In terms of assembly, interacts with maize ubiquilin 1-like (UBL) protein. Homotetramer. Further self-assembles to form highly ordered films at water-air interfaces through intermolecular interactions.

The protein resides in the cell membrane. In terms of biological role, aerial growth, conidiation, and dispersal of filamentous fungi in the environment rely upon a capability of their secreting small amphipathic proteins called hydrophobins (HPBs) with low sequence identity. Class I can self-assemble into an outermost layer of rodlet bundles on aerial cell surfaces, conferring cellular hydrophobicity that supports fungal growth, development and dispersal; whereas Class II form highly ordered films at water-air interfaces through intermolecular interactions but contribute nothing to the rodlet structure. Hyd1 is a class II hydrophobin that acts as an elicitor of induced systemic resistance (ISR) in plants. During interaction with the plant, binds with the maize target protein UBL in order to recruit more UBL proteins in maize roots to elicit plant defense responses, including cell death as well as brassinosteroid, jasmonate (JA) and ethylene (ET) signaling. This chain is Class II hydrophobin 1, found in Trichoderma harzianum (Hypocrea lixii).